We begin with the raw amino-acid sequence, 182 residues long: Inosine/xanthosine triphosphatase (182 aa).

Asp-38 and Glu-68 together coordinate Mg(2+). Glu-68 to Ala-69 contacts substrate.

The protein belongs to the YjjX NTPase family. As to quaternary structure, homodimer. The cofactor is Mg(2+). It depends on Mn(2+) as a cofactor.

The enzyme catalyses XTP + H2O = XDP + phosphate + H(+). It catalyses the reaction ITP + H2O = IDP + phosphate + H(+). Functionally, phosphatase that hydrolyzes non-canonical purine nucleotides such as XTP and ITP to their respective diphosphate derivatives. Probably excludes non-canonical purines from DNA/RNA precursor pool, thus preventing their incorporation into DNA/RNA and avoiding chromosomal lesions. This Erwinia tasmaniensis (strain DSM 17950 / CFBP 7177 / CIP 109463 / NCPPB 4357 / Et1/99) protein is Inosine/xanthosine triphosphatase.